We begin with the raw amino-acid sequence, 1008 residues long: G protein-regulated inducer of neurite outgrowth 1 (1008 aa).

The segment at 1-859 (MDTAEDPAWL…SPPSRRDAGL (859 aa)) is disordered. Thr60 carries the phosphothreonine modification. Ser64 and Ser75 each carry phosphoserine. Positions 117–127 (ISGTPEATTSG) are enriched in polar residues. Composition is skewed to basic and acidic residues over residues 137–159 (TEPK…KSSK), 167–178 (GKEDPGSSRKAD), 230–269 (PRKE…HPVS), and 279–291 (EKVD…KRDP). Residue Ser237 is modified to Phosphoserine. Polar residues-rich tracts occupy residues 326-336 (SGKNGPVSSGT) and 391-406 (HTDT…TSLK). Residues Ser436 and Ser452 each carry the phosphoserine modification. Basic and acidic residues predominate over residues 454-466 (GKEDPVSSRREDP). Polar residues predominate over residues 481–491 (PESSGKTNPVS). The span at 549–559 (GKEDPVSKGKA) shows a compositional bias: basic and acidic residues. A Phosphoserine modification is found at Ser615. Positions 643–656 (PGQEGAAAPGEAGA) are enriched in low complexity. A compositionally biased stretch (basic and acidic residues) spans 659-679 (LKKETPQASEKVDPGSCRKAE). Ser737 carries the post-translational modification Phosphoserine. The span at 742 to 752 (RGSEGRVEPKA) shows a compositional bias: basic and acidic residues. A compositionally biased stretch (polar residues) spans 755-764 (VSSTEASSLG). A Phosphoserine modification is found at Ser799. Residues 838 to 847 (SAFSFQAAPR) are compositionally biased toward low complexity. Position 877 is a phosphothreonine (Thr877). Ser895 and Ser914 each carry phosphoserine. Residues 899–1008 (AAVAPPEPAE…CCSRAGPTAE (110 aa)) are interaction with GNAO1. Positions 943–986 (ERQIEEHGRQGAPAPPPAARAGPGRSGSVRTAPPDGAAKRPPGL) are disordered. Phosphoserine is present on Ser993. Residues Cys999 and Cys1000 are each lipidated (S-palmitoyl cysteine).

As to quaternary structure, interacts with activated forms of GNAI1, GNAO1 and GNAZ. In terms of processing, palmitoylation on Cys-999 and/or Cys-1000 is required for membrane targeting. Widely expressed in the central nervous system, with highest levels in spinal cord.

It is found in the cell membrane. The protein resides in the cell projection. The protein localises to the growth cone. In terms of biological role, may be involved in neurite outgrowth. This chain is G protein-regulated inducer of neurite outgrowth 1 (GPRIN1), found in Homo sapiens (Human).